The chain runs to 366 residues: UDP-N-acetylenolpyruvoylglucosamine reductase (366 aa).

Residues 27-197 enclose the FAD-binding PCMH-type domain; sequence LGGPAAGFVV…LRVRFLLRDG (171 aa). Arg175 is a catalytic residue. The active-site Proton donor is the Ser252. The active site involves Glu358.

This sequence belongs to the MurB family. It depends on FAD as a cofactor.

It is found in the cytoplasm. It catalyses the reaction UDP-N-acetyl-alpha-D-muramate + NADP(+) = UDP-N-acetyl-3-O-(1-carboxyvinyl)-alpha-D-glucosamine + NADPH + H(+). The protein operates within cell wall biogenesis; peptidoglycan biosynthesis. Its function is as follows. Cell wall formation. The polypeptide is UDP-N-acetylenolpyruvoylglucosamine reductase (Saccharopolyspora erythraea (strain ATCC 11635 / DSM 40517 / JCM 4748 / NBRC 13426 / NCIMB 8594 / NRRL 2338)).